The following is a 1822-amino-acid chain: Signal-induced proliferation-associated 1-like protein 1 (1822 aa).

2 disordered regions span residues 1 to 30 (MTSL…PKVH) and 47 to 125 (GSSV…VSLN). Residues 84-94 (PPRKENVKESS) are compositionally biased toward basic and acidic residues. The segment covering 95–125 (RSSQEIETSSCLESLSSKGSPVSQGSSVSLN) has biased composition (low complexity). Residues Ser162, Ser187, Ser193, Ser208, Ser255, and Ser288 each carry the phosphoserine modification. The tract at residues 277–297 (EREKPLKRRSKSETGDSSIFR) is disordered. The region spanning 638–855 (FMKLDEQGLN…RTRQEYLKDL (218 aa)) is the Rap-GAP domain. A PDZ domain is found at 992-1068 (EMTLRRNGLG…VKVVIIPPHD (77 aa)). Phosphoserine occurs at positions 1117, 1126, 1155, 1166, 1188, 1209, and 1220. The interval 1134 to 1165 (AGKGDGKMPLPERAANIPRSISSDGRPLERRL) is disordered. Residues 1183–1252 (SQCRNSPSNL…WQRSEDSLAD (70 aa)) are disordered. Residues 1188-1198 (SPSNLSSSSET) are compositionally biased toward low complexity. Polar residues predominate over residues 1225–1244 (DRQNTQSDIGGSGKSTPSWQ). Phosphoserine occurs at positions 1273 and 1288. A disordered region spans residues 1286–1324 (HLSPNKQGHSDSHYSSHSSSNTLSSNASSAHSDEKWYDG). Residues 1300–1315 (SSHSSSNTLSSNASSA) are compositionally biased toward low complexity. Residue Ser1344 is modified to Phosphoserine; by PLK2. Residue Thr1348 is modified to Phosphothreonine; by PLK2. Residues 1358-1367 (TASLGASTSS) show a composition bias toward low complexity. The interval 1358–1382 (TASLGASTSSPRSGPGKEKVAPLWH) is disordered. Ser1367 bears the Phosphoserine; by CDK5 mark. The residue at position 1384 (Ser1384) is a Phosphoserine. Residues 1395-1407 (LETEGHGMDRKTE) are compositionally biased toward basic and acidic residues. The interval 1395–1493 (LETEGHGMDR…SSSGPRTFYP (99 aa)) is disordered. Phosphoserine is present on residues Ser1408, Ser1409, Ser1430, Ser1449, and Ser1451. A compositionally biased stretch (polar residues) spans 1417 to 1436 (KSQGGSSPLTRENSTFSIND). Low complexity-rich tracts occupy residues 1437–1451 (ATSH…HSAS) and 1471–1486 (SSQL…SSSS). Ser1546 and Ser1567 each carry phosphoserine. The tract at residues 1567-1595 (SPTPESQKNFKFHGLSSPQSPFPSTPTSR) is disordered. Thr1569 bears the Phosphothreonine mark. 5 positions are modified to phosphoserine: Ser1572, Ser1583, Ser1586, Ser1603, and Ser1606. Position 1619 is an asymmetric dimethylarginine (Arg1619). A phosphoserine mark is found at Ser1621, Ser1665, Ser1668, Ser1726, Ser1729, Ser1746, Ser1747, and Ser1752. The stretch at 1753–1813 (PTLASKVDQL…ASDKLKKFTE (61 aa)) forms a coiled coil.

As to quaternary structure, interacts (via PDZ domain) with EPHA4 (via PDZ motif); controls neuronal morphology through regulation of the RAP1 (RAP1A or RAP1B) and RAP2 (RAP2A, RAP2B or RAP2C) GTPases. Interacts with DLG4, PDLIM5, PDLIM7 and LZTS3. Interacts with the actin cytoskeleton. Post-translationally, ubiquitinated and degraded by the SCF(BTRC) following phosphorylation by PLK2. In terms of processing, phosphorylated at Ser-1367 by CDK5, creating a docking site for the POLO box domains of PLK2. Subsequently, PLK2 binds and phosphorylates SIPA1L1, leading to ubiquitination and degradation by the proteasome. Detected in brain (at protein level).

It is found in the cytoplasm. Its subcellular location is the cytoskeleton. The protein resides in the postsynaptic density. The protein localises to the synapse. It localises to the synaptosome. Stimulates the GTPase activity of RAP2A. Promotes reorganization of the actin cytoskeleton and recruits DLG4 to F-actin. Contributes to the regulation of dendritic spine morphogenesis. The protein is Signal-induced proliferation-associated 1-like protein 1 (Sipa1l1) of Rattus norvegicus (Rat).